A 156-amino-acid polypeptide reads, in one-letter code: MSINATLLGQAISFLLFVWFCMKFVWPPLMNAIEERQKKIADGLADAGRAAKDLELAQVKATEQLKDAKATANEIIEQANKRKAQIVDEAKVEADTERAKIIAQGHAEIENERNRVKEDLRKQVAALAIAGAEKILERSIDEAAHSDIVNKLVAEL.

The chain crosses the membrane as a helical span at residues 7–29; that stretch reads LLGQAISFLLFVWFCMKFVWPPL.

Belongs to the ATPase B chain family. As to quaternary structure, F-type ATPases have 2 components, F(1) - the catalytic core - and F(0) - the membrane proton channel. F(1) has five subunits: alpha(3), beta(3), gamma(1), delta(1), epsilon(1). F(0) has three main subunits: a(1), b(2) and c(10-14). The alpha and beta chains form an alternating ring which encloses part of the gamma chain. F(1) is attached to F(0) by a central stalk formed by the gamma and epsilon chains, while a peripheral stalk is formed by the delta and b chains.

Its subcellular location is the cell inner membrane. Its function is as follows. F(1)F(0) ATP synthase produces ATP from ADP in the presence of a proton or sodium gradient. F-type ATPases consist of two structural domains, F(1) containing the extramembraneous catalytic core and F(0) containing the membrane proton channel, linked together by a central stalk and a peripheral stalk. During catalysis, ATP synthesis in the catalytic domain of F(1) is coupled via a rotary mechanism of the central stalk subunits to proton translocation. Component of the F(0) channel, it forms part of the peripheral stalk, linking F(1) to F(0). This chain is ATP synthase subunit b, found in Shewanella halifaxensis (strain HAW-EB4).